We begin with the raw amino-acid sequence, 320 residues long: Ferrochelatase (320 aa).

2 residues coordinate Fe cation: histidine 194 and glutamate 275.

It belongs to the ferrochelatase family.

The protein resides in the cytoplasm. It catalyses the reaction heme b + 2 H(+) = protoporphyrin IX + Fe(2+). It functions in the pathway porphyrin-containing compound metabolism; protoheme biosynthesis; protoheme from protoporphyrin-IX: step 1/1. Catalyzes the ferrous insertion into protoporphyrin IX. This Vibrio atlanticus (strain LGP32) (Vibrio splendidus (strain Mel32)) protein is Ferrochelatase.